The primary structure comprises 137 residues: Transcription antitermination protein NusB (137 aa).

The protein belongs to the NusB family.

In terms of biological role, involved in transcription antitermination. Required for transcription of ribosomal RNA (rRNA) genes. Binds specifically to the boxA antiterminator sequence of the ribosomal RNA (rrn) operons. The sequence is that of Transcription antitermination protein NusB from Proteus mirabilis (strain HI4320).